The primary structure comprises 556 residues: Beta-hexosaminidase subunit beta (556 aa).

The N-terminal stretch at 1–42 (MELCGLGLPRPPMLLALLLATLLAAMLALLTQVALVVQVAEA) is a signal peptide. Positions 43–121 (ARAPSVSAKP…HHEPAEFQAK (79 aa)) are excised as a propeptide. The N-linked (GlcNAc...) asparagine glycan is linked to asparagine 84. Cysteines 91 and 137 form a disulfide. N-linked (GlcNAc...) asparagine glycosylation is found at asparagine 142, asparagine 190, and asparagine 327. 2 disulfides stabilise this stretch: cysteine 309/cysteine 360 and cysteine 534/cysteine 551. The active-site Proton donor is the glutamate 355.

This sequence belongs to the glycosyl hydrolase 20 family. There are 3 forms of beta-hexosaminidase: hexosaminidase A is a heterodimer composed of one subunit alpha and one subunit beta (chain A and B); hexosaminidase B is a homodimer of two beta subunits (two chains A and B); hexosaminidase S is a homodimer of two alpha subunits. The composition of the dimer (isozyme A versus isozyme S) has a significant effect on the substrate specificity of the alpha subunit active site. Post-translationally, N-linked glycans at Asn-142 and Asn-190 consist of Man(3)-GlcNAc(2) and Man(5 to 7)-GlcNAc(2), respectively. In terms of processing, the beta-A and beta-B chains are produced by proteolytic processing of the precursor beta chain.

It localises to the lysosome. The protein localises to the cytoplasmic vesicle. Its subcellular location is the secretory vesicle. The protein resides in the cortical granule. It catalyses the reaction Hydrolysis of terminal non-reducing N-acetyl-D-hexosamine residues in N-acetyl-beta-D-hexosaminides.. It carries out the reaction N-acetyl-beta-D-galactosaminyl-(1-&gt;4)-beta-D-3-sulfogalactosyl-(1-&gt;4)-beta-D-glucosyl-(1&lt;-&gt;1')-ceramide + H2O = a beta-D-3-sulfogalactosyl-(1-&gt;4)-beta-D-glucosyl-(1&lt;-&gt;1')-ceramide + N-acetyl-beta-D-galactosamine. The enzyme catalyses a ganglioside GM2 (d18:1(4E)) + H2O = a ganglioside GM3 (d18:1(4E)) + N-acetyl-beta-D-galactosamine. The catalysed reaction is a ganglioside GM2 + H2O = a ganglioside GM3 + N-acetyl-beta-D-galactosamine. It catalyses the reaction beta-D-GalNAc-(1-&gt;4)-alpha-L-IdoA-(1-&gt;3)-beta-D-GalNAc-4-sulfate-(1-&gt;4)-alpha-L-IdoA-(1-&gt;3)-D-GalNAc-4-sulfate + H2O = alpha-L-IdoA-(1-&gt;3)-beta-D-GalNAc-4-sulfate-(1-&gt;4)-alpha-L-IdoA-(1-&gt;3)-D-GalNAc-4-sulfate + N-acetyl-D-galactosamine. It carries out the reaction N-acetyl-beta-D-6-sulfogalactosaminyl-(1-&gt;4)-alpha-L-iduronyl-(1-&gt;3)-N-acetyl-D-6-sulfogalactosamine + H2O = alpha-L-iduronyl-(1-&gt;3)-N-acetyl-D-6-sulfogalactosamine + N-acetyl-D-6-sulfogalactosamine. Its activity is regulated as follows. Addition of GM2A stimulates the hydrolysis of sulfated glycosphingolipid SM2 and the ganglioside GM2. In terms of biological role, hydrolyzes the non-reducing end N-acetyl-D-hexosamine and/or sulfated N-acetyl-D-hexosamine of glycoconjugates, such as the oligosaccharide moieties from proteins and neutral glycolipids, or from certain mucopolysaccharides. The isozyme B does not hydrolyze each of these substrates, however hydrolyzes efficiently neutral oligosaccharide. Only the isozyme A is responsible for the degradation of GM2 gangliosides in the presence of GM2A. During fertilization is responsible, at least in part, for the zona block to polyspermy. Present in the cortical granules of non-activated oocytes, is exocytosed during the cortical reaction in response to oocyte activation and inactivates the sperm galactosyltransferase-binding site, accounting for the block in sperm binding to the zona pellucida. The chain is Beta-hexosaminidase subunit beta from Homo sapiens (Human).